The sequence spans 240 residues: MRTLFIGDLHLSADRLDITQAFTRFLDTELDDADALYILGDLFEVWVGDDIALPFALELAEKLKQVSQKLPVYFIHGNRDFMLGKQFARAAGMQILPEVKCLNLYGIETVILHGDSLCTLDKAYQRFRKLRSLSLARWLYGCLSKKTRQGIADKIRSNSKSSNQQKSYTIMDVEPNAVDALFAKTHTKHMIHGHTHRPAIHQLANGCQRIVVGDWYEQGSVLSVSAEGINLQSLPFEQAT.

Asp8, His10, Asp41, Asn78, and His113 together coordinate Mn(2+). 78–79 is a binding site for substrate; sequence NR. Substrate-binding residues include Asp121, Ser159, Asn163, Lys166, and His194. Mn(2+) contacts are provided by His194 and His196.

The protein belongs to the LpxH family. It depends on Mn(2+) as a cofactor.

It is found in the cell inner membrane. It catalyses the reaction UDP-2-N,3-O-bis[(3R)-3-hydroxytetradecanoyl]-alpha-D-glucosamine + H2O = 2-N,3-O-bis[(3R)-3-hydroxytetradecanoyl]-alpha-D-glucosaminyl 1-phosphate + UMP + 2 H(+). The protein operates within glycolipid biosynthesis; lipid IV(A) biosynthesis; lipid IV(A) from (3R)-3-hydroxytetradecanoyl-[acyl-carrier-protein] and UDP-N-acetyl-alpha-D-glucosamine: step 4/6. Functionally, hydrolyzes the pyrophosphate bond of UDP-2,3-diacylglucosamine to yield 2,3-diacylglucosamine 1-phosphate (lipid X) and UMP by catalyzing the attack of water at the alpha-P atom. Involved in the biosynthesis of lipid A, a phosphorylated glycolipid that anchors the lipopolysaccharide to the outer membrane of the cell. The chain is UDP-2,3-diacylglucosamine hydrolase from Shewanella baltica (strain OS223).